We begin with the raw amino-acid sequence, 572 residues long: MALTISRAQYVATYGPTVGDKVRLGDTNLWATIEQDLLTKGDECKFGGGKSVRDGMAQSGTATRDNPNVLDFVITNVMIIDAKLGIIKADIGIRDGRIVGIGQAGNPDTMDNVTPNMIIGASTEVHNGAHLIATAGGIDTHIHFICPQQAQHAIESGVTTLIGGGTGPADGTHATTCTPGAWYMERMFQAAEALPVNVGFFGKGNCSTLDPLREQIEAGALGLKIHEDWGATPAVIDSALKVADEMDIQVAIHTDTLNESGFLEDTMKAIDGRVIHTFHTEGAGGGHAPDIIKAAMYSNVLPASTNPTRPFTKNTIDEHLDMLMVCHHLDKRVPEDVAFADSRIRPETIAAEDILHDMGVFSIMSSDSQAMGRIGEVVIRTWQTADKMKMQRGELGNEGNDNFRIKRYIAKYTINPAIAHGIAEHIGSLEVGKIADIVLWKPMFFGVKPEVVIKKGFISYAKMGDPNASIPTPQPVFYRPMYGAQGLATAQTAVFFVSQAAEKADIREKFGLHKETIAVKGCRNVGKKDLVHNDVTPNITVDAERYEVRVDGELITCEPVDSVPLGQRYFLF.

One can recognise a Urease domain in the interval glycine 136–phenylalanine 572. Residues histidine 141, histidine 143, and lysine 224 each contribute to the Ni(2+) site. Lysine 224 carries the N6-carboxylysine modification. Histidine 226 lines the substrate pocket. The Ni(2+) site is built by histidine 253 and histidine 279. Residue histidine 327 is the Proton donor of the active site. Aspartate 367 provides a ligand contact to Ni(2+).

It belongs to the metallo-dependent hydrolases superfamily. Urease alpha subunit family. In terms of assembly, heterotrimer of UreA (gamma), UreB (beta) and UreC (alpha) subunits. Three heterotrimers associate to form the active enzyme. Ni cation serves as cofactor. In terms of processing, carboxylation allows a single lysine to coordinate two nickel ions.

It localises to the cytoplasm. It carries out the reaction urea + 2 H2O + H(+) = hydrogencarbonate + 2 NH4(+). It participates in nitrogen metabolism; urea degradation; CO(2) and NH(3) from urea (urease route): step 1/1. This Haemophilus influenzae (strain 86-028NP) protein is Urease subunit alpha.